Consider the following 99-residue polypeptide: NADH-quinone oxidoreductase subunit K (99 aa).

The next 3 helical transmembrane spans lie at 3–23, 28–48, and 59–79; these read PANY…GVLV, IVVF…LVTF, and IMAF…LAII.

It belongs to the complex I subunit 4L family. NDH-1 is composed of 14 different subunits. Subunits NuoA, H, J, K, L, M, N constitute the membrane sector of the complex.

It is found in the cell membrane. The enzyme catalyses a quinone + NADH + 5 H(+)(in) = a quinol + NAD(+) + 4 H(+)(out). Its function is as follows. NDH-1 shuttles electrons from NADH, via FMN and iron-sulfur (Fe-S) centers, to quinones in the respiratory chain. The immediate electron acceptor for the enzyme in this species is believed to be a menaquinone. Couples the redox reaction to proton translocation (for every two electrons transferred, four hydrogen ions are translocated across the cytoplasmic membrane), and thus conserves the redox energy in a proton gradient. This is NADH-quinone oxidoreductase subunit K from Frankia casuarinae (strain DSM 45818 / CECT 9043 / HFP020203 / CcI3).